The chain runs to 429 residues: 3-phosphoshikimate 1-carboxyvinyltransferase (429 aa).

Lysine 23, serine 24, and arginine 28 together coordinate 3-phosphoshikimate. Lysine 23 contacts phosphoenolpyruvate. Phosphoenolpyruvate is bound by residues glycine 95 and arginine 123. 3-phosphoshikimate is bound by residues serine 168, glutamine 170, aspartate 316, and lysine 343. Glutamine 170 lines the phosphoenolpyruvate pocket. Catalysis depends on aspartate 316, which acts as the Proton acceptor. The phosphoenolpyruvate site is built by arginine 347 and arginine 389.

It belongs to the EPSP synthase family. As to quaternary structure, monomer.

It is found in the cytoplasm. The enzyme catalyses 3-phosphoshikimate + phosphoenolpyruvate = 5-O-(1-carboxyvinyl)-3-phosphoshikimate + phosphate. Its pathway is metabolic intermediate biosynthesis; chorismate biosynthesis; chorismate from D-erythrose 4-phosphate and phosphoenolpyruvate: step 6/7. In terms of biological role, catalyzes the transfer of the enolpyruvyl moiety of phosphoenolpyruvate (PEP) to the 5-hydroxyl of shikimate-3-phosphate (S3P) to produce enolpyruvyl shikimate-3-phosphate and inorganic phosphate. In Bacillus cereus (strain ZK / E33L), this protein is 3-phosphoshikimate 1-carboxyvinyltransferase.